Here is a 53-residue protein sequence, read N- to C-terminus: uncharacterized protein (53 aa).

This is an uncharacterized protein from Bacillus subtilis (strain 168).